Reading from the N-terminus, the 110-residue chain is Large ribosomal subunit protein uL22 (110 aa).

It belongs to the universal ribosomal protein uL22 family. In terms of assembly, part of the 50S ribosomal subunit.

This protein binds specifically to 23S rRNA; its binding is stimulated by other ribosomal proteins, e.g. L4, L17, and L20. It is important during the early stages of 50S assembly. It makes multiple contacts with different domains of the 23S rRNA in the assembled 50S subunit and ribosome. Functionally, the globular domain of the protein is located near the polypeptide exit tunnel on the outside of the subunit, while an extended beta-hairpin is found that lines the wall of the exit tunnel in the center of the 70S ribosome. This Exiguobacterium sp. (strain ATCC BAA-1283 / AT1b) protein is Large ribosomal subunit protein uL22.